A 178-amino-acid polypeptide reads, in one-letter code: Photosystem I assembly protein Ycf4 (178 aa).

2 helical membrane passes run 19 to 39 (ILVA…SLSS) and 61 to 81 (LIMG…WAVI).

It belongs to the Ycf4 family.

It localises to the cellular thylakoid membrane. Functionally, seems to be required for the assembly of the photosystem I complex. In Synechococcus sp. (strain CC9311), this protein is Photosystem I assembly protein Ycf4.